A 186-amino-acid polypeptide reads, in one-letter code: GPI-anchored hemophore ARB_02741 (186 aa).

The signal sequence occupies residues 1–18 (MKFSQAVIALAAATVVSA). The CFEM domain occupies 19–108 (QLPDVPQCSL…SSKPSEPSTS (90 aa)). Intrachain disulfides connect cysteine 26–cysteine 67, cysteine 30–cysteine 62, cysteine 40–cysteine 48, and cysteine 50–cysteine 83. Aspartate 45 provides a ligand contact to heme. Positions 89 to 159 (PVSIPPVEES…NTGVPTQSTP (71 aa)) are disordered. Over residues 96–131 (EESSSKPSEPSTSEAPTASPTESTPAPTTPAPTGTG) the composition is skewed to low complexity. Gly residues predominate over residues 132 to 144 (SPSGTGAPGGPSG). The segment covering 148 to 159 (FTNTGVPTQSTP) has biased composition (polar residues). A lipid anchor (GPI-anchor amidated glycine) is attached at glycine 163. The propeptide at 164–186 (AASGLSANIGGMGAAILAIAAYL) is removed in mature form.

Belongs to the RBT5 family. The GPI-anchor is attached to the protein in the endoplasmic reticulum and serves to target the protein to the cell surface. There, the glucosamine-inositol phospholipid moiety is cleaved off and the GPI-modified mannoprotein is covalently attached via its lipidless GPI glycan remnant to the 1,6-beta-glucan of the outer cell wall layer.

The protein localises to the secreted. It is found in the cell wall. It localises to the cell membrane. Functionally, GPI-anchored cell wall protein involved in stabilizing the cell wall. This chain is GPI-anchored hemophore ARB_02741, found in Arthroderma benhamiae (strain ATCC MYA-4681 / CBS 112371) (Trichophyton mentagrophytes).